A 444-amino-acid polypeptide reads, in one-letter code: Alpha-1,3-mannosyl-glycoprotein 2-beta-N-acetylglucosaminyltransferase (444 aa).

Residues 1-6 are Cytoplasmic-facing; the sequence is MARISC. Residues 7–24 form a helical; Signal-anchor for type II membrane protein membrane-spanning segment; that stretch reads DLRFLLIPAAFMFIYIQM. Residues 25–444 are Lumenal-facing; it reads RLFQTQSQYA…SVMQLGIRNS (420 aa). Residues 61–92 adopt a coiled-coil conformation; that stretch reads KQSRIVALEDMKNRQDEELVQLKDLIQTFEKK. The substrate site is built by R115, D144, H188, and D210. Residue D211 coordinates Mn(2+). D287 functions as the Proton acceptor in the catalytic mechanism. Position 318 (S318) interacts with substrate. Residue N351 is glycosylated (N-linked (GlcNAc...) asparagine).

Belongs to the glycosyltransferase 13 family. It depends on Mn(2+) as a cofactor. Post-translationally, glycosylated. In terms of tissue distribution, expressed in roots, stems, leaves and flowers.

It is found in the golgi apparatus membrane. The catalysed reaction is N(4)-(alpha-D-Man-(1-&gt;3)-[alpha-D-Man-(1-&gt;3)-[alpha-D-Man-(1-&gt;6)]-alpha-D-Man-(1-&gt;6)]-beta-D-Man-(1-&gt;4)-beta-D-GlcNAc-(1-&gt;4)-beta-D-GlcNAc)-L-asparaginyl-[protein] (N-glucan mannose isomer 5A1,2) + UDP-N-acetyl-alpha-D-glucosamine = N(4)-{beta-D-GlcNAc-(1-&gt;2)-alpha-D-Man-(1-&gt;3)-[alpha-D-Man-(1-&gt;3)-[alpha-D-Man-(1-&gt;6)]-alpha-D-Man-(1-&gt;6)]-beta-D-Man-(1-&gt;4)-beta-D-GlcNAc-(1-&gt;4)-beta-D-GlcNAc}-L-asparaginyl-[protein] + UDP + H(+). The protein operates within protein modification; protein glycosylation. Functionally, initiates complex N-linked carbohydrate formation. Essential for the conversion of high-mannose to hybrid and complex N-glycans. Required for normal root growth and morphology. This is Alpha-1,3-mannosyl-glycoprotein 2-beta-N-acetylglucosaminyltransferase from Arabidopsis thaliana (Mouse-ear cress).